The chain runs to 85 residues: Putative membrane protein insertion efficiency factor (85 aa).

The segment at 66 to 85 is disordered; sequence PLNSGGDDPVPPKLDDNREH.

Belongs to the UPF0161 family.

It is found in the cell inner membrane. Functionally, could be involved in insertion of integral membrane proteins into the membrane. The polypeptide is Putative membrane protein insertion efficiency factor (Yersinia pestis bv. Antiqua (strain Antiqua)).